Consider the following 57-residue polypeptide: MARYRRTRTRSRSRRRRRSRRRRSSRRRRYGRSRRSYRSVGRRRRRYGRRRRRRRRY.

The interval 1–57 is disordered; sequence MARYRRTRTRSRSRRRRRSRRRRSSRRRRYGRSRRSYRSVGRRRRRYGRRRRRRRRY. Position 9 is a phosphothreonine (threonine 9).

This sequence belongs to the protamine P1 family. In terms of tissue distribution, testis.

Its subcellular location is the nucleus. It localises to the chromosome. In terms of biological role, protamines substitute for histones in the chromatin of sperm during the haploid phase of spermatogenesis. They compact sperm DNA into a highly condensed, stable and inactive complex. This Coturnix japonica (Japanese quail) protein is Sperm histone.